We begin with the raw amino-acid sequence, 239 residues long: Phosphoribosylaminoimidazole-succinocarboxamide synthase (239 aa).

Belongs to the SAICAR synthetase family.

It carries out the reaction 5-amino-1-(5-phospho-D-ribosyl)imidazole-4-carboxylate + L-aspartate + ATP = (2S)-2-[5-amino-1-(5-phospho-beta-D-ribosyl)imidazole-4-carboxamido]succinate + ADP + phosphate + 2 H(+). It participates in purine metabolism; IMP biosynthesis via de novo pathway; 5-amino-1-(5-phospho-D-ribosyl)imidazole-4-carboxamide from 5-amino-1-(5-phospho-D-ribosyl)imidazole-4-carboxylate: step 1/2. The chain is Phosphoribosylaminoimidazole-succinocarboxamide synthase from Psychrobacter sp. (strain PRwf-1).